The chain runs to 627 residues: Protein EXECUTER 2, chloroplastic (627 aa).

Disordered stretches follow at residues 1–34 (MSAA…PSAA), 212–277 (PTKG…AKDS), and 308–359 (EAEL…SKSP). The N-terminal 45 residues, 1-45 (MSAATACASPAAARPPLHIPLRSPPSAAHLPSAAASRRASSAACR), are a transit peptide targeting the chloroplast. Residues 217-229 (SSASSVSSATAES) show a composition bias toward low complexity. Composition is skewed to acidic residues over residues 308 to 321 (EAEL…ELVQ) and 331 to 353 (SLED…SDSA).

It localises to the plastid. The protein localises to the chloroplast. Together with EX1, enables higher plants to perceive singlet oxygen as a stress signal in plastid that activates a genetically determined nuclear stress response program which triggers a programmed cell death (PCD). This transfer of singlet oxygen-induced stress-related signals from the plastid to the nucleus that triggers genetically controlled PCD pathway is unique to photosynthetic eukaryotes and operates under mild stress conditions, impeding photosystem II (PSII) without causing photooxidative damage of the plant. The chain is Protein EXECUTER 2, chloroplastic from Oryza sativa subsp. japonica (Rice).